The sequence spans 476 residues: UDP-N-acetylmuramate--L-alanine ligase (476 aa).

An ATP-binding site is contributed by 121–127; sequence GAHGKTT.

It belongs to the MurCDEF family.

The protein localises to the cytoplasm. It catalyses the reaction UDP-N-acetyl-alpha-D-muramate + L-alanine + ATP = UDP-N-acetyl-alpha-D-muramoyl-L-alanine + ADP + phosphate + H(+). It functions in the pathway cell wall biogenesis; peptidoglycan biosynthesis. Its function is as follows. Cell wall formation. This chain is UDP-N-acetylmuramate--L-alanine ligase, found in Clavibacter michiganensis subsp. michiganensis (strain NCPPB 382).